A 284-amino-acid polypeptide reads, in one-letter code: RNase adapter protein RapZ (284 aa).

An ATP-binding site is contributed by 8 to 15 (GRSGSGKS). 56–59 (DVRN) is a binding site for GTP. An RNA-binding region spans residues 266–284 (RSRGKNVQSRHRTLEKRKS).

The protein belongs to the RapZ-like family. RapZ subfamily. Homotrimer.

Functionally, modulates the synthesis of GlmS, by affecting the processing and stability of the regulatory small RNA GlmZ. When glucosamine-6-phosphate (GlcN6P) concentrations are high in the cell, RapZ binds GlmZ and targets it to cleavage by RNase E. Consequently, GlmZ is inactivated and unable to activate GlmS synthesis. Under low GlcN6P concentrations, RapZ is sequestered and inactivated by an other regulatory small RNA, GlmY, preventing GlmZ degradation and leading to synthesis of GlmS. The protein is RNase adapter protein RapZ of Cronobacter sakazakii (strain ATCC BAA-894) (Enterobacter sakazakii).